Consider the following 155-residue polypeptide: UPF0178 protein ACIAD2644 (155 aa).

The interval Gly-120–Ala-155 is disordered.

It belongs to the UPF0178 family.

This chain is UPF0178 protein ACIAD2644, found in Acinetobacter baylyi (strain ATCC 33305 / BD413 / ADP1).